We begin with the raw amino-acid sequence, 425 residues long: Serine--tRNA ligase (425 aa).

Positions 41–70 are disordered; it reads TERSQLQARSNQVGKQVGEKIKSGSDPKGT. The segment covering 44 to 54 has biased composition (polar residues); sequence SQLQARSNQVG. The segment covering 57–70 has biased composition (basic and acidic residues); the sequence is VGEKIKSGSDPKGT. 234–236 contributes to the L-serine binding site; it reads TSE. Residue 265 to 267 participates in ATP binding; the sequence is RRE. Glu288 provides a ligand contact to L-serine. 352 to 355 is a binding site for ATP; it reads EISS. Ser388 is an L-serine binding site.

It belongs to the class-II aminoacyl-tRNA synthetase family. Type-1 seryl-tRNA synthetase subfamily. Homodimer. The tRNA molecule binds across the dimer.

It localises to the cytoplasm. The enzyme catalyses tRNA(Ser) + L-serine + ATP = L-seryl-tRNA(Ser) + AMP + diphosphate + H(+). It carries out the reaction tRNA(Sec) + L-serine + ATP = L-seryl-tRNA(Sec) + AMP + diphosphate + H(+). The protein operates within aminoacyl-tRNA biosynthesis; selenocysteinyl-tRNA(Sec) biosynthesis; L-seryl-tRNA(Sec) from L-serine and tRNA(Sec): step 1/1. In terms of biological role, catalyzes the attachment of serine to tRNA(Ser). Is also able to aminoacylate tRNA(Sec) with serine, to form the misacylated tRNA L-seryl-tRNA(Sec), which will be further converted into selenocysteinyl-tRNA(Sec). The polypeptide is Serine--tRNA ligase (Trichodesmium erythraeum (strain IMS101)).